The following is a 358-amino-acid chain: MSTQNTNAQNLSFVLEGIHRVKFEDRPIPEINNPHDVLVNVRFTGICGSDVHYWEHGSIGQFIVKDPMVLGHESSGVVSKVGSAVTSLKVGDCVAMEPGIPCRRCEPCKAGKYNLCVKMAFAATPPYDGTLAKYYVLPEDFCYKLPESITLQEGAIMEPLSVAVHIVKQAGINPGQSVVVFGAGPVGLLCCAVAKAYGASKVIAVDIQKGRLDFAKKYAATATFEPAKAAALENAQRIITENDLGSGADVAIDASGAEPSVHTGIHVLRAGGTYVQGGMGRSEITFPIMAACTKELNVKGSFRYGSGDYKLAVSLVSAGKVNVKELITGVVKFEDAERAFEEVRAGKGIKTLIAGVDS.

Residues Cys47, His72, and Glu73 each coordinate Zn(2+). Gly182–Gly187 provides a ligand contact to NAD(+).

The protein belongs to the zinc-containing alcohol dehydrogenase family. Zn(2+) serves as cofactor.

It carries out the reaction xylitol + NAD(+) = D-xylulose + NADH + H(+). The protein operates within carbohydrate degradation; L-arabinose degradation via L-arabinitol; D-xylulose 5-phosphate from L-arabinose (fungal route): step 4/5. Its function is as follows. Xylitol dehydrogenase which catalyzes the conversion of xylitol to D-xylulose. Xylose is a major component of hemicelluloses such as xylan. Most fungi utilize D-xylose via three enzymatic reactions, xylose reductase (XR), xylitol dehydrogenase (XDH), and xylulokinase, to form xylulose 5-phosphate, which enters pentose phosphate pathway. In Aspergillus niger (strain ATCC MYA-4892 / CBS 513.88 / FGSC A1513), this protein is Probable D-xylulose reductase A (xdhA).